A 254-amino-acid chain; its full sequence is Serotonin N-acetyltransferase 1, chloroplastic (254 aa).

The transit peptide at 1 to 83 directs the protein to the chloroplast; the sequence is MASAASASAS…NSTETVEPPS (83 aa). The region spanning 119–254 is the N-acetyltransferase domain; the sequence is VNVYDLQALC…IKGMFWYPRF (136 aa).

The protein resides in the plastid. It localises to the chloroplast. The protein localises to the nucleus. The catalysed reaction is a 2-arylethylamine + acetyl-CoA = an N-acetyl-2-arylethylamine + CoA + H(+). The protein operates within aromatic compound metabolism; melatonin biosynthesis; melatonin from serotonin: step 1/2. Catalyzes the N-acetylation of serotonin into N-acetylserotonin, the penultimate step in the synthesis of melatonin. Catalyzes in vitro the N-acetylation of tryptamine to produce N-acetyltryptamine, 5-methoxytryptamine to produce melatonin and tyramine to produce N-acetyltyramine. Acetyltransferase required for geminivirus infection and systemic spread. This chain is Serotonin N-acetyltransferase 1, chloroplastic, found in Oryza sativa subsp. indica (Rice).